A 962-amino-acid chain; its full sequence is Alpha-glucan phosphorylase 1 (962 aa).

The N-terminal 63 residues, 1-63, are a transit peptide targeting the chloroplast; the sequence is MDTMRISGVS…RSFLSVKSIS (63 aa). The interval 525–552 is disordered; sequence AKDAQNGVKTEQEEEKTAGEEEEDEVIP. Residue Lys808 is modified to N6-(pyridoxal phosphate)lysine.

Belongs to the glycogen phosphorylase family. It depends on pyridoxal 5'-phosphate as a cofactor.

It localises to the plastid. The protein localises to the chloroplast stroma. The enzyme catalyses [(1-&gt;4)-alpha-D-glucosyl](n) + phosphate = [(1-&gt;4)-alpha-D-glucosyl](n-1) + alpha-D-glucose 1-phosphate. In terms of biological role, phosphorylase is an important allosteric enzyme in carbohydrate metabolism. Enzymes from different sources differ in their regulatory mechanisms and in their natural substrates. However, all known phosphorylases share catalytic and structural properties. May be not required for the degradation of starch, but the phosphorolysis of starch may play an important role in water stress tolerance. This is Alpha-glucan phosphorylase 1 (PHS1) from Arabidopsis thaliana (Mouse-ear cress).